Here is a 448-residue protein sequence, read N- to C-terminus: Adenylosuccinate synthetase (448 aa).

Residues 36-42 and 64-66 contribute to the GTP site; these read GDEGKGK and GHT. Catalysis depends on Asp37, which acts as the Proton acceptor. 2 residues coordinate Mg(2+): Asp37 and Gly64. Residues 37–40, 62–65, Thr154, Arg168, Asn246, Thr261, and Arg325 each bind IMP; these read DEGK and NAGH. Catalysis depends on His65, which acts as the Proton donor. 321–327 is a binding site for substrate; it reads VTTKRKR. Residues Arg327, 353 to 355, and 436 to 438 each bind GTP; these read KLD and GVG.

This sequence belongs to the adenylosuccinate synthetase family. In terms of assembly, homodimer. Mg(2+) is required as a cofactor.

Its subcellular location is the cytoplasm. It carries out the reaction IMP + L-aspartate + GTP = N(6)-(1,2-dicarboxyethyl)-AMP + GDP + phosphate + 2 H(+). It functions in the pathway purine metabolism; AMP biosynthesis via de novo pathway; AMP from IMP: step 1/2. Functionally, plays an important role in the de novo pathway and in the salvage pathway of purine nucleotide biosynthesis. Catalyzes the first committed step in the biosynthesis of AMP from IMP. The protein is Adenylosuccinate synthetase of Drosophila ananassae (Fruit fly).